Here is a 365-residue protein sequence, read N- to C-terminus: Neuronal migration protein doublecortin (365 aa).

The tract at residues 11–31 (RDKTSRNMRGSRMNGLPSPTH) is disordered. T14 carries the post-translational modification Phosphothreonine; by PKC. S28 bears the Phosphoserine; by CDK5 mark. S47 is modified (phosphoserine; by MARK1 and PKA). Doublecortin domains are found at residues 53–139 (KKVR…VEYT) and 180–263 (KLVT…AQDD). Position 70 is a phosphotyrosine; by ABL (Y70). S74 is subject to Phosphoserine; by PKC. S90 is modified (phosphoserine; by CK2). The residue at position 110 (S110) is a Phosphoserine; by PKC. Phosphoserine; by CK2, MARK1 and PKA is present on S115. The residue at position 265 (S265) is a Phosphoserine; by CK2. The interval 275-365 (KGNPSATAGP…DDSDSLGDSM (91 aa)) is disordered. S287 bears the Phosphoserine; by CDK5 mark. Phosphothreonine; by CDK5 is present on T289. S294 bears the Phosphoserine; by PKC mark. S297 carries the phosphoserine; by CDK5 modification. S306 carries the post-translational modification Phosphoserine; by CK2. S306 is subject to Phosphoserine; by DYRK2. The segment covering 307-341 (PADSGNDQDANGTSSSQLSTPKSKQSPISTPTSPG) has biased composition (polar residues). T326 carries the post-translational modification Phosphothreonine; by CDK5. A Phosphothreonine; by PKC and MAPK modification is found at T326. Position 332 is a phosphoserine; by CDK5 (S332). S332 is subject to Phosphoserine; by MAPK. T336 is modified (phosphothreonine; by MAPK). Residue S339 is modified to Phosphoserine; by CDK5. S339 is modified (phosphoserine; by MAPK). S342 is modified (phosphoserine; by PKC). Residues S354 and S360 each carry the phosphoserine; by CK2 modification. The segment covering 356 to 365 (DDSDSLGDSM) has biased composition (acidic residues).

As to quaternary structure, interacts with tubulin. Interacts with USP9X. Post-translationally, phosphorylation by MARK1, MARK2 and PKA regulates its ability to bind microtubules. Phosphorylation at Ser-265 and Ser-297 seems to occur only in neonatal brain, the levels falling precipitously by postnatal day 21. Ubiquitinated by MDM2, leading to its degradation by the proteasome. Ubiquitinated by MDM2 and subsequent degradation leads to reduce the dendritic spine density of olfactory bulb granule cells. As to expression, highly expressed in neuronal cells of fetal brain (in the majority of cells of the cortical plate, intermediate zone and ventricular zone), but not expressed in other fetal tissues. In the adult, highly expressed in the brain frontal lobe, but very low expression in other regions of brain, and not detected in heart, placenta, lung, liver, skeletal muscles, kidney and pancreas.

It is found in the cytoplasm. The protein localises to the cell projection. The protein resides in the neuron projection. In terms of biological role, microtubule-associated protein required for initial steps of neuronal dispersion and cortex lamination during cerebral cortex development. May act by competing with the putative neuronal protein kinase DCLK1 in binding to a target protein. May in that way participate in a signaling pathway that is crucial for neuronal interaction before and during migration, possibly as part of a calcium ion-dependent signal transduction pathway. May be part with PAFAH1B1/LIS-1 of overlapping, but distinct, signaling pathways that promote neuronal migration. The polypeptide is Neuronal migration protein doublecortin (DCX) (Homo sapiens (Human)).